A 160-amino-acid chain; its full sequence is UPF0225 protein PputW619_1140 (160 aa).

The protein belongs to the UPF0225 family.

The protein is UPF0225 protein PputW619_1140 of Pseudomonas putida (strain W619).